The primary structure comprises 405 residues: Putative polysaccharide ligase RP358 (405 aa).

10 helical membrane-spanning segments follow: residues 23–43, 77–97, 120–140, 156–178, 201–221, 227–247, 270–290, 322–342, 353–375, and 377–397; these read IAAT…ISFI, LFTA…NSLV, VLYI…LFFI, FGLY…AIII, ISDS…FILA, IFFK…PVIA, LFIW…GYGF, ILQI…CLVY, VSNF…MISY, and IWQT…KLLV.

It belongs to the O-antigen ligase family.

Its subcellular location is the membrane. The chain is Putative polysaccharide ligase RP358 from Rickettsia prowazekii (strain Madrid E).